Reading from the N-terminus, the 331-residue chain is Phosphoenolpyruvate transferase (331 aa).

Asp-63 lines the 7,8-didemethyl-8-hydroxy-5-deazariboflavin pocket.

Belongs to the CofD family. As to quaternary structure, homodimer. Requires Mg(2+) as cofactor.

The enzyme catalyses enolpyruvoyl-2-diphospho-5'-guanosine + 7,8-didemethyl-8-hydroxy-5-deazariboflavin = dehydro coenzyme F420-0 + GMP + H(+). It participates in cofactor biosynthesis; coenzyme F420 biosynthesis. Functionally, catalyzes the transfer of the phosphoenolpyruvate moiety from enoylpyruvoyl-2-diphospho-5'-guanosine (EPPG) to 7,8-didemethyl-8-hydroxy-5-deazariboflavin (FO) with the formation of dehydro coenzyme F420-0 and GMP. This Mycobacterium sp. (strain KMS) protein is Phosphoenolpyruvate transferase.